A 366-amino-acid polypeptide reads, in one-letter code: Probable cyclin-dependent kinase 10 (366 aa).

Residues 7–293 (FEKLDSIGEG…ASDAIKHPFF (287 aa)) form the Protein kinase domain. ATP contacts are provided by residues 13–21 (IGEGTYGIV) and Lys36. Residue Asp132 is the Proton acceptor of the active site. Residues 315–358 (FKNQNKKQNNNFNNFVQNNQTNQNNQTNQNNQTNQNNKTSQNNN) show a composition bias toward low complexity. The disordered stretch occupies residues 315-366 (FKNQNKKQNNNFNNFVQNNQTNQNNQTNQNNQTNQNNKTSQNNNMDSYKYSK).

The protein belongs to the protein kinase superfamily. CMGC Ser/Thr protein kinase family. CDC2/CDKX subfamily.

The enzyme catalyses L-seryl-[protein] + ATP = O-phospho-L-seryl-[protein] + ADP + H(+). The catalysed reaction is L-threonyl-[protein] + ATP = O-phospho-L-threonyl-[protein] + ADP + H(+). The sequence is that of Probable cyclin-dependent kinase 10 (cdk10) from Dictyostelium discoideum (Social amoeba).